The chain runs to 606 residues: Ectonucleoside triphosphate diphosphohydrolase 7 (606 aa).

Topologically, residues 1–28 (MARISFSYLCPASWYFTVPTVSPFLRQR) are cytoplasmic. The helical transmembrane segment at 29-49 (VAFLGLFFIPCVLLLLLIMDL) threads the bilayer. Residues 50 to 548 (RHWATSLPRD…PAHGSWLRLS (499 aa)) lie on the Vesicular side of the membrane. Residue Glu-217 is the Proton acceptor of the active site. Asn-330 carries N-linked (GlcNAc...) asparagine glycosylation. Cys-448 and Cys-477 are oxidised to a cystine. Residues 549 to 569 (FVYNHYLFFACTLVVLLAIVL) form a helical membrane-spanning segment. The Cytoplasmic portion of the chain corresponds to 570–606 (YLLRIHRIHRRQTRASAPLDLLWIEQVVPMIGVQVGP).

This sequence belongs to the GDA1/CD39 NTPase family. The cofactor is Ca(2+). Mg(2+) is required as a cofactor. Widely expressed. Expressed at high level in brain, kidney, liver, testis and small intestin. Weakly expressed in lung, thymus and heart.

The protein resides in the cytoplasmic vesicle membrane. The enzyme catalyses a ribonucleoside 5'-triphosphate + H2O = a ribonucleoside 5'-diphosphate + phosphate + H(+). It carries out the reaction UTP + H2O = UDP + phosphate + H(+). It catalyses the reaction GTP + H2O = GDP + phosphate + H(+). The catalysed reaction is CTP + H2O = CDP + phosphate + H(+). The enzyme catalyses ATP + H2O = ADP + phosphate + H(+). Its function is as follows. Catalyzes the hydrolysis of nucleoside triphosphates and diphosphates in a calcium- or magnesium-dependent manner. Preferentially hydrolyzes nucleoside 5'-triphosphates, with substrate preference for UTP &gt; GTP &gt; CTP. Hydrolyzes nucleoside diphosphates only to a minor extent. In contrast to its human ortholog is able to hydrolyze ATP. In the epithelial cells of small intestine controls luminal ATP levels, therefore regulating Th17-cell development. This is Ectonucleoside triphosphate diphosphohydrolase 7 (Entpd7) from Mus musculus (Mouse).